Here is a 39-residue protein sequence, read N- to C-terminus: Gas vesicle protein C (39 aa).

This sequence belongs to the gas vesicle GvpC family.

The protein resides in the gas vesicle. In terms of biological role, confers stability, involved in shaping gas vesicles, hollow, gas filled proteinaceous nanostructures. During planktonic growth they allow positioning of the organism at a favorable depth for light or nutrient acquisition. The chain is Gas vesicle protein C from Spirulina sp. (strain CCAP 1475/10).